A 686-amino-acid polypeptide reads, in one-letter code: MTQNTADTHASAQAQEVIAKMRTLIAQVRKHNNAYYVMDEPTISDNEYDQLRLSLIELEERYPELTQPDSPTASVGDNPLPSFSQVQHDIAMLSLGNIFNYQDLQEFMRRVNDRLSDADRNPEYEIEMKLDGLAVSLKYHNGQFVRGVTRGDGQMGEDITQNVKTINNIPLVIEAAQDIDVLEVRGEVLMPKAGFKRLNRLAQENGDKTFANPRNAAAGSLRQLDPAVAASRPLAFYAYSVNQGLPEAITLQSAALTWLKQLGFTVSDFERVKTAQQVQDYYESMIQKRADLAFEIDGMVIKVDDLTLQSQLGALSREPRWATAYKFPAETVMTTLNSIEWQVGRTGQLTPVGKLEPVQVGGVTVSNVTLHNFGEIQRLDVRAGDTVSVHRAGDVIPKVTRVWHDLRPEGTSAVTLPTHCPVCDSPVVLPEGEALARCTGELFCPAQQQEALIHFVSRKAMDIDGLGERWLISFFEHGIVKTVADIYHLNEHADELVTLEKLGEKSVSNMLRAIEESKKTTLARFIYALGIRGVGETTAQNLAQYFGDLPELMGASIDALEAVPDVGHITAELIYNFFRAEHNIEVINALQQAGVYWDKVEQQALDNLPLEGQTWVITGTLVASGMSRDDAKAHLQALGAKVSGSVSAKTSALLAGEKAGSKLTKAQSLGVRVVLEDEFLKMIGAS.

NAD(+)-binding positions include 45–49 (DNEYD), 94–95 (SL), and Glu-127. Lys-129 serves as the catalytic N6-AMP-lysine intermediate. NAD(+)-binding residues include Arg-150, Glu-187, Lys-302, and Lys-326. Zn(2+) contacts are provided by Cys-420, Cys-423, Cys-438, and Cys-444. A BRCT domain is found at 605–686 (LDNLPLEGQT…DEFLKMIGAS (82 aa)).

It belongs to the NAD-dependent DNA ligase family. LigA subfamily. It depends on Mg(2+) as a cofactor. Mn(2+) serves as cofactor.

It carries out the reaction NAD(+) + (deoxyribonucleotide)n-3'-hydroxyl + 5'-phospho-(deoxyribonucleotide)m = (deoxyribonucleotide)n+m + AMP + beta-nicotinamide D-nucleotide.. Its function is as follows. DNA ligase that catalyzes the formation of phosphodiester linkages between 5'-phosphoryl and 3'-hydroxyl groups in double-stranded DNA using NAD as a coenzyme and as the energy source for the reaction. It is essential for DNA replication and repair of damaged DNA. The chain is DNA ligase from Psychrobacter sp. (strain PRwf-1).